Here is a 380-residue protein sequence, read N- to C-terminus: Glutamine synthetase, chloroplastic (380 aa).

The GS beta-grasp domain maps to 35-125 (MAAEYIWADG…VMCEVFAPDG (91 aa)). The 249-residue stretch at 132 to 380 (TRAKLREIID…RLLIKTVLKG (249 aa)) folds into the GS catalytic domain.

The protein belongs to the glutamine synthetase family. Homooctamer.

It localises to the plastid. Its subcellular location is the chloroplast. The enzyme catalyses L-glutamate + NH4(+) + ATP = L-glutamine + ADP + phosphate + H(+). This is Glutamine synthetase, chloroplastic (GLN2) from Chlamydomonas reinhardtii (Chlamydomonas smithii).